Here is a 192-residue protein sequence, read N- to C-terminus: Lipid A acyltransferase PagP (192 aa).

An N-terminal signal peptide occupies residues 1 to 29 (MVVNVVIVAKKYFLFITLLIIQVSLPAHA). Residues His64, Asp107, and Ser108 contribute to the active site.

The protein belongs to the lipid A palmitoyltransferase family. In terms of assembly, homodimer.

The protein localises to the cell outer membrane. It carries out the reaction a lipid A + a 1,2-diacyl-sn-glycero-3-phosphocholine = a hepta-acyl lipid A + a 2-acyl-sn-glycero-3-phosphocholine. The enzyme catalyses a lipid IVA + a 1,2-diacyl-sn-glycero-3-phosphocholine = a lipid IVB + a 2-acyl-sn-glycero-3-phosphocholine. The catalysed reaction is a lipid IIA + a 1,2-diacyl-sn-glycero-3-phosphocholine = a lipid IIB + a 2-acyl-sn-glycero-3-phosphocholine. Transfers a fatty acid residue from the sn-1 position of a phospholipid to the N-linked hydroxyfatty acid chain on the proximal unit of lipid A or its precursors. The sequence is that of Lipid A acyltransferase PagP from Citrobacter rodentium (strain ICC168) (Citrobacter freundii biotype 4280).